Here is a 547-residue protein sequence, read N- to C-terminus: Chaperonin GroEL (547 aa).

Residues 30–33 (TLGP), Lys-51, 87–91 (DGTTT), Gly-415, 479–481 (NAA), and Asp-495 each bind ATP.

It belongs to the chaperonin (HSP60) family. As to quaternary structure, forms a cylinder of 14 subunits composed of two heptameric rings stacked back-to-back. Interacts with the co-chaperonin GroES.

It is found in the cytoplasm. It carries out the reaction ATP + H2O + a folded polypeptide = ADP + phosphate + an unfolded polypeptide.. Together with its co-chaperonin GroES, plays an essential role in assisting protein folding. The GroEL-GroES system forms a nano-cage that allows encapsulation of the non-native substrate proteins and provides a physical environment optimized to promote and accelerate protein folding. This is Chaperonin GroEL from Cupriavidus necator (strain ATCC 17699 / DSM 428 / KCTC 22496 / NCIMB 10442 / H16 / Stanier 337) (Ralstonia eutropha).